Here is a 315-residue protein sequence, read N- to C-terminus: Periplasmic [NiFeSe] hydrogenase small subunit (315 aa).

A signal peptide (tat-type signal) is located at residues 1-32 (MSLSRREFVKLCSAGVAGLGISQIYHPGIVHA). Residues Cys50, Cys53, Cys158, Cys196, His240, Cys243, Cys263, Cys269, Cys278, Cys290, Cys296, and Cys299 each contribute to the [4Fe-4S] cluster site.

The protein belongs to the [NiFe]/[NiFeSe] hydrogenase small subunit family. Heterodimer of a large and a small subunit. The cofactor is [4Fe-4S] cluster. Post-translationally, predicted to be exported by the Tat system. The position of the signal peptide cleavage has been experimentally proven.

The protein localises to the periplasm. The catalysed reaction is H2 + A = AH2. The sequence is that of Periplasmic [NiFeSe] hydrogenase small subunit from Desulfomicrobium baculatum (Desulfovibrio baculatus).